Reading from the N-terminus, the 299-residue chain is Ubiquinol-cytochrome c reductase complex assembly factor 1 (299 aa).

Belongs to the CBP3 family. Interacts with UQCC2. Interacts with UQCC3. Forms a complex, named COMB/coordinator of mitochondrial CYTB biogenesis, composed of UQCC1, UQCC2, UQCC4, UQCC5 and UQCC6; stabilizes nascent cytochrome b/MT-CYB and promotes its membrane insertion. Forms a complex, named COMB/coordinator of mitochondrial CYTB biogenesis, composed of UQCC1, UQCC2, UQCC4, UQCC5 and UQCC6; stabilizes nascent cytochrome b/MT-CYB and promotes its membrane insertion. Forms a complex, named COMA, composed of UQCC1, UQCC2 and UQCC4; activates MT-CYB translation. Forms a complex, named COMC, composed of UQCC1, UQCC2; UQCC3 and UQCC4; mediates MT-CYB hemylation and association with the first nuclear-encoded CIII subunit UQCRQ.

It localises to the mitochondrion inner membrane. The protein localises to the cytoplasmic vesicle. Functionally, required for the assembly of the ubiquinol-cytochrome c reductase complex (mitochondrial respiratory chain complex III or cytochrome b-c1 complex). Involved in cytochrome b translation and/or stability. This chain is Ubiquinol-cytochrome c reductase complex assembly factor 1 (UQCC1), found in Homo sapiens (Human).